A 416-amino-acid polypeptide reads, in one-letter code: MSLYPYNSDEDEARKNSNYHDFDELVPSEEIENASKPSDTFPGRKSRNINVILDHSAFVRGIGNIKRWFNQEYIKAHIDPNADEEIYLNIYIPSYTLHEFDYVKKGTSMMATNAREAIRFIDKIFEKELNGEDETDPMNPDSKPGKKSIIYDLYIESPNESGPSWSECLNYKVHSPKIKEFPNFKTKFDSNLIGQHPIPQGESLESHNSFDETNYNNSSAYKQNNKLNDIQYENSQSYQNALANADELAEMPTRLRYLIRSCIYKRFIERKSFNSPLEEWKLVTEDPITKVWAKSFGIDCMNVNEAELLIFQSYDINQYQLYDPRHTFSVDDESHAPNSILQNTIDTTLYSYTKIDRPSKSKNKNKNKNTKKSTKPKQINGVVSDGCTGANGDFVKKERFDAINYAPRGTGDLWKP.

Disordered regions lie at residues 1–21 (MSLYPYNSDEDEARKNSNYHD), 195–218 (QHPIPQGESLESHNSFDETNYNNS), and 356–393 (DRPSKSKNKNKNKNTKKSTKPKQINGVVSDGCTGANGD). A compositionally biased stretch (basic and acidic residues) spans 12 to 21 (EARKNSNYHD). The span at 360–375 (KSKNKNKNKNTKKSTK) shows a compositional bias: basic residues.

The protein localises to the cytoplasm. Its function is as follows. Involved in nonsense-mediated decay of mRNAs containing premature stop codons. This is Nonsense-mediated decay protein 4 (NMD4) from Debaryomyces hansenii (strain ATCC 36239 / CBS 767 / BCRC 21394 / JCM 1990 / NBRC 0083 / IGC 2968) (Yeast).